The following is a 635-amino-acid chain: MSAEDILNEIKAAVINKAPGNAVITDVEFEGSEVVIYAKNPELFSNNLIKEFARDFRKRLAIRPDPSVLVEPDIAKDKILKIVPEDAEITNCIFDANTGEVIIESKKPGLVIGKEGSTLEDIKKAIQWAPKPVRTPPIPSDTIKAIRATMYRERADVKDILRRIGRRIHRDVRLRDDSWVRTSFLGGSREVGRTCLYHQTPESRILVDCGINIAVEDEKAFPHFDAPEFSIEEIDAVVVTHAHLDHCGFIPGLFRYGYDGPVYCTKPTRDLMTLLQKDYVDITEKEGKNVPYSSKDIKNCIKHTIPLDYGVTTDIAPAIKLTMHNAGHILGSAIAHCHVGDGLYNVAYTGDIKFEASRLLEPAVCQFPRLETLIIESTYGGYDDVLPERDETEKEFLRVIAETIARKGKAIIPVFGIGRAQELMLVLEEGYNQGIFNAPVYLDGMIWEATAIHTAYPEYLSKNMRNRIFHEGDNPFLSEVFKKVKNTNDRRNIMDSDEPGIILTTSGMLSGGPSVEYFKNLADDEKNSIVFVGYQSEGTLGRKIQKGFKEIPLMGKNGRSKAVKVNLSVHTLEGFSGHSDRKQLIKYLRKLKPIPDRILTVHGEVSKCIDLASTAYKLFKKETKAPMNLDSIRLR.

KHa regions lie at residues 1–69 (MSAE…PSVL) and 4–69 (EDIL…PSVL). The interval 70-137 (VEPDIAKDKI…WAPKPVRTPP (68 aa)) is KHb. 2 metallo-beta-lactamase N-terminus regions span residues 179–382 (WVRT…YGGY) and 179–383 (WVRT…GGYD). 2 beta-Casp regions span residues 180–577 (VRTS…GFSG) and 383–576 (DDVL…EGFS). Zn(2+)-binding residues include H241, H243, D245, H246, H328, and D351. Metallo-beta-lactamase C-terminus regions lie at residues 577 to 635 (GHSD…IRLR) and 578 to 635 (HSDR…IRLR). H602 contacts Zn(2+).

The protein belongs to the metallo-beta-lactamase superfamily. RNA-metabolizing metallo-beta-lactamase-like family. FttA subfamily. Homodimer. Interacts with RNA polymerase (RNAP); interaction is not dependent on DNA or RNA. Interacts with the Spt4-Spt5 complex. It depends on Zn(2+) as a cofactor.

It localises to the chromosome. Terminates transcription on the whole genome. Termination is linked to FttA-mediated RNA cleavage and does not require NTP hydrolysis. Cleaves endonucleolytically at the RNA exit channel of RNA polymerase (RNAP); the 5'-3' exonuclease activity of this protein degrades the nascent RNA released from RNAP. In terms of biological role, terminates transcription genome-wide. Transcription termination is most effective in vivo on RNAs with more than one U4-tract in their 3'-ends (including non-protein coding RNAs); U4-tracts are recognized by this protein. Also plays a role in termination of RNAs without U-tracts by an unknown mechanism. Has endonuclease activity after U-rich tracts in transcription termination sites. Binds RNA at U4-tracts found directly upstream of the experimentally determined transcription termination sites; binds preferentially to RNAs with more U4-tracts at their 3'-ends. In Methanococcus maripaludis (strain DSM 14266 / JCM 13030 / NBRC 101832 / S2 / LL), this protein is Transcription termination factor FttA.